A 144-amino-acid polypeptide reads, in one-letter code: Small ribosomal subunit protein uS12 (144 aa).

The residue at position 103 (Asp-103) is a 3-methylthioaspartic acid. Residues 125 to 144 (QQGRSRYGAKKGKAAPAKKK) form a disordered region. Residues 131–144 (YGAKKGKAAPAKKK) are compositionally biased toward basic residues.

Belongs to the universal ribosomal protein uS12 family. In terms of assembly, part of the 30S ribosomal subunit. Contacts proteins S8 and S17. May interact with IF1 in the 30S initiation complex.

Functionally, with S4 and S5 plays an important role in translational accuracy. Its function is as follows. Interacts with and stabilizes bases of the 16S rRNA that are involved in tRNA selection in the A site and with the mRNA backbone. Located at the interface of the 30S and 50S subunits, it traverses the body of the 30S subunit contacting proteins on the other side and probably holding the rRNA structure together. The combined cluster of proteins S8, S12 and S17 appears to hold together the shoulder and platform of the 30S subunit. This Dehalococcoides mccartyi (strain ATCC BAA-2100 / JCM 16839 / KCTC 5957 / BAV1) protein is Small ribosomal subunit protein uS12.